The primary structure comprises 598 residues: DNA mismatch repair protein MutL (598 aa).

Belongs to the DNA mismatch repair MutL/HexB family.

Functionally, this protein is involved in the repair of mismatches in DNA. It is required for dam-dependent methyl-directed DNA mismatch repair. May act as a 'molecular matchmaker', a protein that promotes the formation of a stable complex between two or more DNA-binding proteins in an ATP-dependent manner without itself being part of a final effector complex. This Thiobacillus denitrificans (strain ATCC 25259 / T1) protein is DNA mismatch repair protein MutL.